A 188-amino-acid polypeptide reads, in one-letter code: Putative protein SSX6 (188 aa).

Disordered regions lie at residues 1–22 (MNGD…EKRS) and 74–188 (KRAT…EDDK). The 64-residue stretch at 20 to 83 (KRSKAFDDIA…KRATDSQRND (64 aa)) folds into the KRAB-related domain. 2 stretches are compositionally biased toward basic and acidic residues: residues 75-96 (RATD…EVER) and 112-122 (MPEKPAEEGSD). S123 is subject to Phosphoserine. A compositionally biased stretch (basic and acidic residues) spans 147-156 (SSEKIHERSG). Positions 157–170 (PKRGKHAWTHRLRE) are enriched in basic residues. Residues 179–188 (EISDPEEDDK) show a composition bias toward acidic residues.

It belongs to the SSX family. In terms of tissue distribution, not detected in any normal tissues. Expressed in a melanoma cell line.

Functionally, could act as a modulator of transcription. The polypeptide is Putative protein SSX6 (Homo sapiens (Human)).